Consider the following 690-residue polypeptide: Polyribonucleotide nucleotidyltransferase (690 aa).

Residues D483 and D489 each coordinate Mg(2+). Residues 550–609 (PKMEQITVDKKDIAAVIGKGGATIREIVEKSGAKLDVNDEGVVTVAAPDEESRNIAMQMI) enclose the KH domain. The S1 motif domain maps to 619 to 686 (NKIYSGKVMK…DRGKVKLSMK (68 aa)).

Belongs to the polyribonucleotide nucleotidyltransferase family. Requires Mg(2+) as cofactor.

Its subcellular location is the cytoplasm. The catalysed reaction is RNA(n+1) + phosphate = RNA(n) + a ribonucleoside 5'-diphosphate. Involved in mRNA degradation. Catalyzes the phosphorolysis of single-stranded polyribonucleotides processively in the 3'- to 5'-direction. The sequence is that of Polyribonucleotide nucleotidyltransferase from Pelagibacter ubique (strain HTCC1062).